Consider the following 397-residue polypeptide: Elongation factor Tu (397 aa).

One can recognise a tr-type G domain in the interval 10–206; it reads KPHVNIGTIG…AVDENVPDPE (197 aa). Positions 19–26 are G1; the sequence is GHVDHGKT. Residue 19 to 26 participates in GTP binding; that stretch reads GHVDHGKT. Residue Thr-26 coordinates Mg(2+). The tract at residues 62–66 is G2; it reads GITIQ. A G3 region spans residues 83–86; sequence DAPG. GTP is bound by residues 83-87 and 138-141; these read DAPGH and NKAD. The G4 stretch occupies residues 138–141; that stretch reads NKAD. The segment at 176 to 178 is G5; sequence SAL.

It belongs to the TRAFAC class translation factor GTPase superfamily. Classic translation factor GTPase family. EF-Tu/EF-1A subfamily. As to quaternary structure, monomer.

It is found in the cytoplasm. The catalysed reaction is GTP + H2O = GDP + phosphate + H(+). GTP hydrolase that promotes the GTP-dependent binding of aminoacyl-tRNA to the A-site of ribosomes during protein biosynthesis. This chain is Elongation factor Tu, found in Saccharopolyspora erythraea (strain ATCC 11635 / DSM 40517 / JCM 4748 / NBRC 13426 / NCIMB 8594 / NRRL 2338).